The chain runs to 374 residues: 4-hydroxy-3-methylbut-2-en-1-yl diphosphate synthase (flavodoxin) (374 aa).

[4Fe-4S] cluster contacts are provided by cysteine 270, cysteine 273, cysteine 305, and glutamate 312.

The protein belongs to the IspG family. [4Fe-4S] cluster serves as cofactor.

The enzyme catalyses (2E)-4-hydroxy-3-methylbut-2-enyl diphosphate + oxidized [flavodoxin] + H2O + 2 H(+) = 2-C-methyl-D-erythritol 2,4-cyclic diphosphate + reduced [flavodoxin]. The protein operates within isoprenoid biosynthesis; isopentenyl diphosphate biosynthesis via DXP pathway; isopentenyl diphosphate from 1-deoxy-D-xylulose 5-phosphate: step 5/6. Its function is as follows. Converts 2C-methyl-D-erythritol 2,4-cyclodiphosphate (ME-2,4cPP) into 1-hydroxy-2-methyl-2-(E)-butenyl 4-diphosphate. The sequence is that of 4-hydroxy-3-methylbut-2-en-1-yl diphosphate synthase (flavodoxin) from Vibrio cholerae serotype O1 (strain ATCC 39315 / El Tor Inaba N16961).